Reading from the N-terminus, the 293-residue chain is Aromatic amino acid exporter YddG (293 aa).

At 1–6 (MTSQKA) the chain is on the cytoplasmic side. The chain crosses the membrane as a helical span at residues 7-27 (TLIGLVAIVLWSTMVGLIRGV). An EamA 1 domain is found at 15-137 (VLWSTMVGLI…IALTGVCWVL (123 aa)). At 28 to 33 (SEGLGP) the chain is on the periplasmic side. The helical transmembrane segment at 34-54 (VGGAAMIYSLSGLLLIFTVGL) threads the bilayer. The Cytoplasmic segment spans residues 55 to 63 (PDIRRFPGR). The helical transmembrane segment at 64–84 (YLIAGSVLFVSYEICLALSLG) threads the bilayer. Topologically, residues 85-92 (YAATRHQA) are periplasmic. A helical membrane pass occupies residues 93 to 113 (IEVGMVNYLWPSLTILFAILF). The Cytoplasmic portion of the chain corresponds to 114 to 119 (NGQKTN). A helical transmembrane segment spans residues 120–140 (WLIVPGLLIALTGVCWVLGGE). Residues 141-147 (NGLNPGE) are Periplasmic-facing. Residues 148-168 (IISNVATSPLSYLLAFLGAFI) form a helical membrane-spanning segment. In terms of domain architecture, EamA 2 spans 167 to 285 (FIWATYCTVT…AVMVCVGSLL (119 aa)). Over 169–182 (WATYCTVTNKYARG) the chain is Cytoplasmic. Residues 183–203 (FNGITVFVLLTAVALWLHYFL) traverse the membrane as a helical segment. Residues 204-207 (TPQP) are Periplasmic-facing. The helical transmembrane segment at 208–228 (AMIFSLPVIAKLFTAALTLGF) threads the bilayer. Over 229 to 243 (AYAAWNVGILHGNVT) the chain is Cytoplasmic. A helical membrane pass occupies residues 244 to 264 (IMAVGSYFTPVMSSALAALLL). The Periplasmic segment spans residues 265–267 (SSP). The chain crosses the membrane as a helical span at residues 268 to 288 (LSFSFWQGAVMVCVGSLLCWL). Topologically, residues 289–293 (ATRRR) are cytoplasmic.

It belongs to the drug/metabolite transporter (DMT) superfamily. Aromatic amino acid/paraquat exporter (ArAA/P-E) (TC 2.A.7.17) family.

The protein resides in the cell inner membrane. In terms of biological role, amino acid transporter with broad substrate specificity. Required for resistance to methyl viologen. May function with OmpD porin. The polypeptide is Aromatic amino acid exporter YddG (yddG) (Salmonella typhimurium (strain 14028s / SGSC 2262)).